The sequence spans 444 residues: Methylenetetrahydrofolate--tRNA-(uracil-5-)-methyltransferase TrmFO (444 aa).

10–15 (GAGLAG) provides a ligand contact to FAD.

This sequence belongs to the MnmG family. TrmFO subfamily. Requires FAD as cofactor.

It localises to the cytoplasm. It catalyses the reaction uridine(54) in tRNA + (6R)-5,10-methylene-5,6,7,8-tetrahydrofolate + NADH + H(+) = 5-methyluridine(54) in tRNA + (6S)-5,6,7,8-tetrahydrofolate + NAD(+). The enzyme catalyses uridine(54) in tRNA + (6R)-5,10-methylene-5,6,7,8-tetrahydrofolate + NADPH + H(+) = 5-methyluridine(54) in tRNA + (6S)-5,6,7,8-tetrahydrofolate + NADP(+). Functionally, catalyzes the folate-dependent formation of 5-methyl-uridine at position 54 (M-5-U54) in all tRNAs. This chain is Methylenetetrahydrofolate--tRNA-(uracil-5-)-methyltransferase TrmFO, found in Streptococcus equi subsp. zooepidemicus (strain H70).